A 106-amino-acid chain; its full sequence is uncharacterized protein (106 aa).

A disordered region spans residues 54–106 (RSTLVATSPRRRSLVQQRRPPLREQNGGSGSSCVSSGGSASTVKTPGSRRASK). Positions 84–94 (SSCVSSGGSAS) are enriched in low complexity.

This is an uncharacterized protein from Human adenovirus C serotype 2 (HAdV-2).